We begin with the raw amino-acid sequence, 154 residues long: Superoxide dismutase [Cu-Zn] (154 aa).

Cu cation is bound by residues histidine 47, histidine 49, and histidine 64. An intrachain disulfide couples cysteine 58 to cysteine 147. The Zn(2+) site is built by histidine 64, histidine 72, histidine 81, and aspartate 84. Histidine 121 is a binding site for Cu cation. The span at 125-136 shows a compositional bias: basic and acidic residues; it reads DDLGKGGNEESL. Residues 125–144 form a disordered region; sequence DDLGKGGNEESLKTGNAGPR. A substrate-binding site is contributed by arginine 144.

Belongs to the Cu-Zn superoxide dismutase family. Homodimer. Cu cation serves as cofactor. Zn(2+) is required as a cofactor.

It is found in the cytoplasm. It carries out the reaction 2 superoxide + 2 H(+) = H2O2 + O2. Its function is as follows. Destroys radicals which are normally produced within the cells and which are toxic to biological systems. This chain is Superoxide dismutase [Cu-Zn] (sod-1), found in Neurospora crassa (strain ATCC 24698 / 74-OR23-1A / CBS 708.71 / DSM 1257 / FGSC 987).